Reading from the N-terminus, the 494-residue chain is MFKFAAAVILCLVAASSTLAQHNPHWWGNRNTIVHLFEWKWSDIAAECESFLGPRGFAGVQVSPVNENIISAGRPWWERYQPISYKLVTRSGNEQEFADMVRRCNDVGVRIYVDVLLNHMSGDFDGIAVGTAGSEAEPSKKSYPGVPYSALDFHPTCEITDWNDRFQVQQCELVGLKDLDQSSEWVRSKLIEFLDHLIELGVAGFRVDAAKHMAADDLSYIYSSISDLNIEHGFPHNARPFIFQEVIDHGHETVSREEYNQLGAVTEFRFSEEIGNAFRGNNALKWLQSWGTGWGFLPSGQALTFVDNHDNQRDMGAVLNYKSPKQYKMATAFHLAYPYGISRVMSSFAFDDHDTAPPQDEQERIISPEFDEEGACVNGWICEHRWRQIYAMVGFKNAVRDTELSNWWDNGDNQISFCRGNKGFLAVNNNLYDLSRELQTCLPAGVYCDVISGSLIDGSCTGKSVTVDGNGYGYIHIGSDDFDGVLALHVDARI.

Residues 1–20 form the signal peptide; that stretch reads MFKFAAAVILCLVAASSTLA. The residue at position 21 (Gln-21) is a Pyrrolidone carboxylic acid. A disulfide bond links Cys-48 and Cys-104. Ca(2+) contacts are provided by Asn-118, Gln-169, and Asp-178. Cys-157 and Cys-171 are oxidised to a cystine. Arg-206 lines the chloride pocket. Asp-208 acts as the Nucleophile in catalysis. His-212 contributes to the Ca(2+) binding site. The active-site Proton donor is the Glu-245. Positions 308 and 343 each coordinate chloride. 3 cysteine pairs are disulfide-bonded: Cys-376/Cys-382, Cys-418/Cys-441, and Cys-448/Cys-460.

This sequence belongs to the glycosyl hydrolase 13 family. Monomer. It depends on Ca(2+) as a cofactor. Chloride serves as cofactor.

It is found in the secreted. It catalyses the reaction Endohydrolysis of (1-&gt;4)-alpha-D-glucosidic linkages in polysaccharides containing three or more (1-&gt;4)-alpha-linked D-glucose units.. This chain is Alpha-amylase-related protein (Amyrel), found in Drosophila atripex (Fruit fly).